The following is a 384-amino-acid chain: Deoxyguanosinetriphosphate triphosphohydrolase-like protein (384 aa).

One can recognise an HD domain in the interval 63–199; sequence RLTHSLEVAT…ASLADDISYI (137 aa).

This sequence belongs to the dGTPase family. Type 2 subfamily.

The sequence is that of Deoxyguanosinetriphosphate triphosphohydrolase-like protein from Rickettsia typhi (strain ATCC VR-144 / Wilmington).